The chain runs to 288 residues: ATP synthase gamma chain (288 aa).

This sequence belongs to the ATPase gamma chain family. As to quaternary structure, F-type ATPases have 2 components, CF(1) - the catalytic core - and CF(0) - the membrane proton channel. CF(1) has five subunits: alpha(3), beta(3), gamma(1), delta(1), epsilon(1). CF(0) has three main subunits: a, b and c.

The protein localises to the cell membrane. Functionally, produces ATP from ADP in the presence of a proton gradient across the membrane. The gamma chain is believed to be important in regulating ATPase activity and the flow of protons through the CF(0) complex. This is ATP synthase gamma chain from Shouchella clausii (strain KSM-K16) (Alkalihalobacillus clausii).